The sequence spans 35 residues: Photosystem II reaction center protein T (35 aa).

The helical transmembrane segment at 3–23 threads the bilayer; the sequence is ALVYTFLLVSTLGIIFFAIFF.

It belongs to the PsbT family. PSII is composed of 1 copy each of membrane proteins PsbA, PsbB, PsbC, PsbD, PsbE, PsbF, PsbH, PsbI, PsbJ, PsbK, PsbL, PsbM, PsbT, PsbY, PsbZ, Psb30/Ycf12, at least 3 peripheral proteins of the oxygen-evolving complex and a large number of cofactors. It forms dimeric complexes.

The protein localises to the plastid. It localises to the chloroplast thylakoid membrane. Its function is as follows. Found at the monomer-monomer interface of the photosystem II (PS II) dimer, plays a role in assembly and dimerization of PSII. PSII is a light-driven water plastoquinone oxidoreductase, using light energy to abstract electrons from H(2)O, generating a proton gradient subsequently used for ATP formation. This is Photosystem II reaction center protein T from Ginkgo biloba (Ginkgo).